The chain runs to 404 residues: CCA-adding enzyme (404 aa).

ATP is bound by residues Gly27 and Arg30. The CTP site is built by Gly27 and Arg30. Mg(2+) is bound by residues Asp40 and Asp42. Positions 111, 154, 157, 160, and 163 each coordinate ATP. 5 residues coordinate CTP: Arg111, Asp154, Arg157, Arg160, and Arg163.

This sequence belongs to the tRNA nucleotidyltransferase/poly(A) polymerase family. Bacterial CCA-adding enzyme type 3 subfamily. In terms of assembly, homodimer. It depends on Mg(2+) as a cofactor.

It catalyses the reaction a tRNA precursor + 2 CTP + ATP = a tRNA with a 3' CCA end + 3 diphosphate. The catalysed reaction is a tRNA with a 3' CCA end + 2 CTP + ATP = a tRNA with a 3' CCACCA end + 3 diphosphate. Functionally, catalyzes the addition and repair of the essential 3'-terminal CCA sequence in tRNAs without using a nucleic acid template. Adds these three nucleotides in the order of C, C, and A to the tRNA nucleotide-73, using CTP and ATP as substrates and producing inorganic pyrophosphate. tRNA 3'-terminal CCA addition is required both for tRNA processing and repair. Also involved in tRNA surveillance by mediating tandem CCA addition to generate a CCACCA at the 3' terminus of unstable tRNAs. While stable tRNAs receive only 3'-terminal CCA, unstable tRNAs are marked with CCACCA and rapidly degraded. This chain is CCA-adding enzyme, found in Geobacillus kaustophilus (strain HTA426).